We begin with the raw amino-acid sequence, 201 residues long: Holliday junction branch migration complex subunit RuvA (201 aa).

The interval 1–63 (MIEFVRGYVD…EDTLALYGFR (63 aa)) is domain I. The segment at 64-142 (TREERTLFAK…AVTAKTFPDL (79 aa)) is domain II. Residues 143-153 (FHLQEESARPH) form a flexible linker region. Residues 153–201 (HLSALEEAIEALKALGYAEREIQKVVPSLMKENLSTDQYVKRALQQLLK) are domain III.

This sequence belongs to the RuvA family. As to quaternary structure, homotetramer. Forms an RuvA(8)-RuvB(12)-Holliday junction (HJ) complex. HJ DNA is sandwiched between 2 RuvA tetramers; dsDNA enters through RuvA and exits via RuvB. An RuvB hexamer assembles on each DNA strand where it exits the tetramer. Each RuvB hexamer is contacted by two RuvA subunits (via domain III) on 2 adjacent RuvB subunits; this complex drives branch migration. In the full resolvosome a probable DNA-RuvA(4)-RuvB(12)-RuvC(2) complex forms which resolves the HJ.

The protein localises to the cytoplasm. Functionally, the RuvA-RuvB-RuvC complex processes Holliday junction (HJ) DNA during genetic recombination and DNA repair, while the RuvA-RuvB complex plays an important role in the rescue of blocked DNA replication forks via replication fork reversal (RFR). RuvA specifically binds to HJ cruciform DNA, conferring on it an open structure. The RuvB hexamer acts as an ATP-dependent pump, pulling dsDNA into and through the RuvAB complex. HJ branch migration allows RuvC to scan DNA until it finds its consensus sequence, where it cleaves and resolves the cruciform DNA. In Geobacillus sp. (strain WCH70), this protein is Holliday junction branch migration complex subunit RuvA.